The sequence spans 200 residues: Small ribosomal subunit protein uS4 (200 aa).

Positions 92 to 155 (SRLDAVVYSL…QNLDIIKESV (64 aa)) constitute an S4 RNA-binding domain.

The protein belongs to the universal ribosomal protein uS4 family. As to quaternary structure, part of the 30S ribosomal subunit. Contacts protein S5. The interaction surface between S4 and S5 is involved in control of translational fidelity.

Functionally, one of the primary rRNA binding proteins, it binds directly to 16S rRNA where it nucleates assembly of the body of the 30S subunit. In terms of biological role, with S5 and S12 plays an important role in translational accuracy. This is Small ribosomal subunit protein uS4 from Staphylococcus haemolyticus (strain JCSC1435).